The primary structure comprises 156 residues: UPF0523 protein C (156 aa).

Belongs to the UPF0523 family.

The protein is UPF0523 protein C of Dictyostelium discoideum (Social amoeba).